The chain runs to 461 residues: Porin AaxA (461 aa).

An N-terminal signal peptide occupies residues 1 to 22 (MSFRSVLLTALLSLSFTTTMQA).

The protein belongs to the OprB family.

It is found in the cell outer membrane. Facilitates L-arginine uptake, as part of the AaxABC system. The arginine uptake by the bacterium in the macrophage may be a virulence factor against the host innate immune response. In Chlamydia trachomatis serovar L2 (strain ATCC VR-902B / DSM 19102 / 434/Bu), this protein is Porin AaxA (aaxA).